We begin with the raw amino-acid sequence, 244 residues long: 14-3-3 protein beta/alpha (244 aa).

N-acetylmethionine is present on Met-1.

Belongs to the 14-3-3 family. Homodimer, and heterodimer with other family members.

The protein resides in the cytoplasm. Functionally, adapter protein implicated in the regulation of a large spectrum of both general and specialized signaling pathways. Binds to a large number of partners, usually by recognition of a phosphoserine or phosphothreonine motif. Binding generally results in the modulation of the activity of the binding partner. The polypeptide is 14-3-3 protein beta/alpha (ywhab) (Xenopus tropicalis (Western clawed frog)).